The following is a 425-amino-acid chain: Ribulose bisphosphate carboxylase/oxygenase activase B, chloroplastic (425 aa).

A chloroplast-targeting transit peptide spans 1-43 (MASAFSSTVGAPASTPTIFLGKKVKNYYHGGNKMKSRVVRVMA). 153-160 (GGKGQGKS) lines the ATP pocket.

It belongs to the RuBisCO activase family.

It is found in the plastid. The protein localises to the chloroplast stroma. In terms of biological role, activation of RuBisCO (ribulose-1,5-bisphosphate carboxylase/oxygenase; EC 4.1.1.39) involves the ATP-dependent carboxylation of the epsilon-amino group of lysine leading to a carbamate structure. The protein is Ribulose bisphosphate carboxylase/oxygenase activase B, chloroplastic (RCAB) of Hordeum vulgare (Barley).